The following is a 186-amino-acid chain: MHKLVLASGSPRRKELLAQLGYTFDVVLPDIEECKAEQETAAEYVLRLSQQKAQAGLALVSESSIVVGSDTVVVCDGQVLEKPHHFADAQRMLTQLSDRRHQVMTAVTVVSAEKQHSIVVTTEVWFKKLTQEEIEQYWQSGEPCDKAGSYGIQGLGGRFVTRIEGSYSAVVGLPLYETDQLLHEFI.

D70 (proton acceptor) is an active-site residue.

Belongs to the Maf family. YhdE subfamily. A divalent metal cation serves as cofactor.

The protein resides in the cytoplasm. It carries out the reaction dTTP + H2O = dTMP + diphosphate + H(+). The catalysed reaction is UTP + H2O = UMP + diphosphate + H(+). Its function is as follows. Nucleoside triphosphate pyrophosphatase that hydrolyzes dTTP and UTP. May have a dual role in cell division arrest and in preventing the incorporation of modified nucleotides into cellular nucleic acids. The sequence is that of dTTP/UTP pyrophosphatase from Vibrio vulnificus (strain CMCP6).